The chain runs to 325 residues: CRISPR-associated endonuclease Cas1 3 (325 aa).

Positions 152, 217, and 232 each coordinate Mn(2+).

Belongs to the CRISPR-associated endonuclease Cas1 family. In terms of assembly, homodimer, forms a heterotetramer with a Cas2 homodimer. Mg(2+) is required as a cofactor. Requires Mn(2+) as cofactor.

Its function is as follows. CRISPR (clustered regularly interspaced short palindromic repeat), is an adaptive immune system that provides protection against mobile genetic elements (viruses, transposable elements and conjugative plasmids). CRISPR clusters contain spacers, sequences complementary to antecedent mobile elements, and target invading nucleic acids. CRISPR clusters are transcribed and processed into CRISPR RNA (crRNA). Acts as a dsDNA endonuclease. Involved in the integration of spacer DNA into the CRISPR cassette. This Thermodesulfovibrio yellowstonii (strain ATCC 51303 / DSM 11347 / YP87) protein is CRISPR-associated endonuclease Cas1 3.